Reading from the N-terminus, the 117-residue chain is Putative iron-sulfur cluster insertion protein ErpA (117 aa).

The iron-sulfur cluster site is built by Cys45, Cys109, and Cys111.

It belongs to the HesB/IscA family. Homodimer. Iron-sulfur cluster serves as cofactor.

Its function is as follows. Required for insertion of 4Fe-4S clusters. The chain is Putative iron-sulfur cluster insertion protein ErpA from Chromobacterium violaceum (strain ATCC 12472 / DSM 30191 / JCM 1249 / CCUG 213 / NBRC 12614 / NCIMB 9131 / NCTC 9757 / MK).